The chain runs to 306 residues: MNQYKNFIMQFEDIVGNNNVLIDEPMKKHTSFKVGGPADLLITPTTLEQVKDSIILCRNNSIPYYIIGNGSNLLVRDGGIRGVVIKFLKLGDIKVEGDRVIAQSGAPLTNICNEALKSNLGGLEFACGIPGSVGGAVTMNAGAYNGEISQVIESAKVIDKDGNVFLLNKEQLDLGYRMSAIQKYHYIVLEVTFKLHNSEYDTIKNRIMDLNRRRTEKQPLEYPSAGSTFKRPEGHFAAKLIEDTGLKGESIGGAQVSEKHSGFIINKGGATAGDILNLIEFVQNKVMEKFEVDLHTEVRIIGEENN.

The 165-residue stretch at 34-198 (VGGPADLLIT…LEVTFKLHNS (165 aa)) folds into the FAD-binding PCMH-type domain. The active site involves arginine 177. Residue serine 227 is the Proton donor of the active site. Glutamate 297 is a catalytic residue.

Belongs to the MurB family. FAD serves as cofactor.

Its subcellular location is the cytoplasm. The enzyme catalyses UDP-N-acetyl-alpha-D-muramate + NADP(+) = UDP-N-acetyl-3-O-(1-carboxyvinyl)-alpha-D-glucosamine + NADPH + H(+). It functions in the pathway cell wall biogenesis; peptidoglycan biosynthesis. Its function is as follows. Cell wall formation. This is UDP-N-acetylenolpyruvoylglucosamine reductase from Clostridium botulinum (strain ATCC 19397 / Type A).